The primary structure comprises 89 residues: U-scoloptoxin(12)-Er1a (89 aa).

The first 22 residues, 1-22 (MKGLFLVVFLMWFVSQMNTEET), serve as a signal peptide directing secretion.

Belongs to the scoloptoxin-12 family. In terms of processing, contains 3 disulfide bonds. Expressed by the venom gland.

The protein resides in the secreted. This Ethmostigmus rubripes (Giant centipede) protein is U-scoloptoxin(12)-Er1a.